The primary structure comprises 406 residues: Renin (406 aa).

A signal peptide spans 1–23; the sequence is MDGWRRMPRWGLLLLLWGSCTFG. A propeptide spans 24–66 (activation peptide); sequence LPTDTTTFKRIFLKRMPSIRESLKERGVDMARLGPEWSQPMKR. Residue asparagine 71 is glycosylated (N-linked (GlcNAc...) asparagine). A Peptidase A1 domain is found at 86–403; sequence YYGEIGIGTP…DRRNNRIGFA (318 aa). The active site involves aspartate 104. A disulfide bridge connects residues cysteine 117 and cysteine 124. Asparagine 141 carries N-linked (GlcNAc...) asparagine glycosylation. Cysteine 283 and cysteine 287 are joined by a disulfide. Aspartate 292 is a catalytic residue. An intrachain disulfide couples cysteine 325 to cysteine 362.

It belongs to the peptidase A1 family. As to quaternary structure, interacts with ATP6AP2.

It localises to the secreted. Its subcellular location is the membrane. The enzyme catalyses Cleavage of Leu-|-Xaa bond in angiotensinogen to generate angiotensin I.. Interaction with ATP6AP2 results in a 5-fold increased efficiency in angiotensinogen processing. Renin is a highly specific endopeptidase, whose only known function is to generate angiotensin I from angiotensinogen in the plasma, initiating a cascade of reactions that produce an elevation of blood pressure and increased sodium retention by the kidney. The sequence is that of Renin (REN) from Macaca fascicularis (Crab-eating macaque).